A 2005-amino-acid polypeptide reads, in one-letter code: Sodium channel protein type 2 subunit alpha (2005 aa).

Residues 1–129 are Cytoplasmic-facing; that stretch reads MAQSVLVPPG…KLAIKILVHS (129 aa). At Ser-4 the chain carries Phosphoserine. The interval 28–61 is disordered; that stretch reads RIAEEKAKRPKQERKDEDDENGPKPNSDLEAGKS. A Glycyl lysine isopeptide (Lys-Gly) (interchain with G-Cter in SUMO1) cross-link involves residue Lys-38. The stretch at 111 to 456 is one I repeat; the sequence is ILTPFNPIRK…QQMLEQLKKQ (346 aa). A helical transmembrane segment spans residues 130–148; that stretch reads LFNMLIMCTILTNCVFMTM. The Extracellular segment spans residues 149-155; it reads SNPPDWT. Residues 156–176 form a helical membrane-spanning segment; that stretch reads KNVEYTFTGIYTFESLIKILA. The Cytoplasmic portion of the chain corresponds to 177–190; the sequence is RGFCLEDFTFLRDP. Residues 191–208 form a helical membrane-spanning segment; sequence WNWLDFTVITFAYVTEFV. At 209–214 the chain is on the extracellular side; the sequence is DLGNVS. Residue Asn-212 is glycosylated (N-linked (GlcNAc...) asparagine). Residues 215–231 traverse the membrane as a helical segment; it reads ALRTFRVLRALKTISVI. Residues 232-250 lie on the Cytoplasmic side of the membrane; it reads PGLKTIVGALIQSVKKLSD. The chain crosses the membrane as a helical span at residues 251 to 270; sequence VMILTVFCLSVFALIGLQLF. The Extracellular portion of the chain corresponds to 271-369; the sequence is MGNLRNKCLQ…PNYGYTSFDT (99 aa). Cys-278 and Cys-338 are oxidised to a cystine. N-linked (GlcNAc...) asparagine glycosylation is found at Asn-285, Asn-291, Asn-297, Asn-303, Asn-308, and Asn-340. Positions 370–394 form an intramembrane region, pore-forming; it reads FSWAFLSLFRLMTQDFWENLYQLTL. At 395-401 the chain is on the extracellular side; it reads RAAGKTY. A helical transmembrane segment spans residues 402–422; the sequence is MIFFVLVIFLGSFYLINLILA. The Cytoplasmic portion of the chain corresponds to 423–759; the sequence is VVAMAYEEQN…HLVNLVVMDP (337 aa). Residues Ser-468, Ser-471, Ser-484, Ser-526, Ser-528, Ser-531, Ser-553, Ser-554, Ser-558, Ser-573, Ser-576, Ser-589, Ser-610, Ser-623, Ser-686, Ser-687, and Ser-721 each carry the phosphoserine modification. Residues 494 to 529 are disordered; the sequence is SSKSEKELKNRRKKKKQKEQSGEEEKNDRVRKSESE. A compositionally biased stretch (basic and acidic residues) spans 511–529; sequence KEQSGEEEKNDRVRKSESE. A disordered region spans residues 590-610; that stretch reads ENDFADDEHSTFEDNDSRRDS. Positions 596–610 are enriched in basic and acidic residues; it reads DEHSTFEDNDSRRDS. The stretch at 741 to 1013 is one II repeat; sequence CCKPWLKVKH…QIAVGRMQKG (273 aa). A helical membrane pass occupies residues 760–778; it reads FVDLAITICIVLNTLFMAM. Topologically, residues 779-789 are extracellular; the sequence is EHYPMTEQFSS. A helical transmembrane segment spans residues 790-809; it reads VLSVGNLVFTGIFTAEMFLK. The Cytoplasmic portion of the chain corresponds to 810 to 823; the sequence is IIAMDPYYYFQEGW. A helical membrane pass occupies residues 824-843; it reads NIFDGFIVSLSLMELGLANV. Over 844–845 the chain is Extracellular; it reads EG. The helical transmembrane segment at 846-863 threads the bilayer; that stretch reads LSVLRSFRLLRVFKLAKS. Over 864-879 the chain is Cytoplasmic; it reads WPTLNMLIKIIGNSVG. Residues 880–898 traverse the membrane as a helical segment; it reads ALGNLTLVLAIIVFIFAVV. At 899-927 the chain is on the extracellular side; sequence GMQLFGKSYKECVCKISNDCELPRWHMHD. The cysteines at positions 912 and 918 are disulfide-linked. The binds SCN2B stretch occupies residues 917-918; that stretch reads DC. Residues 928–948 constitute an intramembrane region (pore-forming); sequence FFHSFLIVFRVLCGEWIETMW. Residues 949 to 961 are Extracellular-facing; the sequence is DCMEVAGQTMCLT. Cys-950 and Cys-959 are disulfide-bonded. The chain crosses the membrane as a helical span at residues 962-982; that stretch reads VFMMVMVIGNLVVLNLFLALL. Residues 983–1209 are Cytoplasmic-facing; sequence LSSFSSDNLA…TCYKIVEHNW (227 aa). The tract at residues 1120 to 1165 is disordered; the sequence is EEFSSESDMEESKEKLNATSSSEGSTVDIGAPAEGEQPEVEPEESL. Positions 1155–1165 are enriched in acidic residues; that stretch reads EQPEVEPEESL. The III repeat unit spans residues 1190–1504; that stretch reads KGKLWWNLRK…KKYYNAMKKL (315 aa). A helical membrane pass occupies residues 1210-1227; the sequence is FETFIVFMILLSSGALAF. Over 1228-1240 the chain is Extracellular; it reads EDIYIEQRKTIKT. Residues 1241–1259 form a helical membrane-spanning segment; that stretch reads MLEYADKVFTYIFILEMLL. The Cytoplasmic segment spans residues 1260–1273; the sequence is KWVAYGFQVYFTNA. A helical membrane pass occupies residues 1274–1292; the sequence is WCWLDFLIVDVSLVSLTAN. The Extracellular portion of the chain corresponds to 1293–1300; it reads ALGYSELG. The helical transmembrane segment at 1301–1319 threads the bilayer; that stretch reads AIKSLRTLRALRPLRALSR. At 1320-1336 the chain is on the cytoplasmic side; the sequence is FEGMRVVVNALLGAIPS. A helical membrane pass occupies residues 1337–1356; the sequence is IMNVLLVCLIFWLIFSIMGV. Over 1357 to 1408 the chain is Extracellular; it reads NLFAGKFYHCINYTTGEMFDVSVVNNYSECKALIESNQTARWKNVKVNFDNV. Cys-1366 and Cys-1386 form a disulfide bridge. 3 N-linked (GlcNAc...) asparagine glycosylation sites follow: Asn-1368, Asn-1382, and Asn-1393. Positions 1409–1430 form an intramembrane region, pore-forming; that stretch reads GLGYLSLLQVATFKGWMDIMYA. The Extracellular segment spans residues 1431-1447; sequence AVDSRNVELQPKYEDNL. The helical transmembrane segment at 1448-1469 threads the bilayer; sequence YMYLYFVIFIIFGSFFTLNLFI. At 1470–1532 the chain is on the cytoplasmic side; it reads GVIIDNFNQQ…MVFDFVTKQV (63 aa). At Ser-1506 the chain carries Phosphoserine; by PKC. The stretch at 1513-1811 is one IV repeat; sequence IPRPANKFQG…WEKFDPDATQ (299 aa). The helical transmembrane segment at 1533–1550 threads the bilayer; that stretch reads FDISIMILICLNMVTMMV. The Extracellular segment spans residues 1551 to 1561; the sequence is ETDDQSQEMTN. A helical transmembrane segment spans residues 1562–1580; it reads ILYWINLVFIVLFTGECVL. Residues 1581-1592 are Cytoplasmic-facing; sequence KLISLRYYYFTI. A helical transmembrane segment spans residues 1593 to 1610; that stretch reads GWNIFDFVVVILSIVGMF. Over 1611–1623 the chain is Extracellular; the sequence is LAELIEKYFVSPT. A helical membrane pass occupies residues 1624–1640; the sequence is LFRVIRLARIGRILRLI. The Cytoplasmic segment spans residues 1641 to 1659; that stretch reads KGAKGIRTLLFALMMSLPA. A helical transmembrane segment spans residues 1660 to 1677; that stretch reads LFNIGLLLFLVMFIYAIF. The Extracellular portion of the chain corresponds to 1678 to 1699; the sequence is GMSNFAYVKREVGIDDMFNFET. Positions 1700 to 1722 form an intramembrane region, pore-forming; that stretch reads FGNSMICLFQITTSAGWDGLLAP. Residues 1723 to 1752 lie on the Extracellular side of the membrane; it reads ILNSGPPDCDPDKDHPGSSVKGDCGNPSVG. A disulfide bridge connects residues Cys-1731 and Cys-1746. A helical membrane pass occupies residues 1753–1775; that stretch reads IFFFVSYIIISFLVVVNMYIAVI. At 1776–2005 the chain is on the cytoplasmic side; the sequence is LENFSVATEE…KGKDIRESKK (230 aa). Residues 1905 to 1934 form the IQ domain; it reads EEVSAIIIQRAYRRYLLKQKVKKVSSIYKK. A Phosphoserine modification is found at Ser-1930. Residues 1935–1964 show a composition bias toward basic and acidic residues; that stretch reads DKGKECDGTPIKEDTLIDKLNENSTPEKTD. Positions 1935 to 2005 are disordered; the sequence is DKGKECDGTP…KGKDIRESKK (71 aa). Thr-1943, Thr-1963, and Thr-1966 each carry phosphothreonine. Ser-1971 bears the Phosphoserine mark. The segment covering 1979–2005 has biased composition (basic and acidic residues); that stretch reads TKPEKEKFEKDKSEKEDKGKDIRESKK.

Belongs to the sodium channel (TC 1.A.1.10) family. Nav1.2/SCN2A subfamily. In terms of assembly, heterooligomer of a large alpha subunit and a smaller beta subunit. Heterooligomer with SCN2B or SCN4B; disulfide-linked. Heterooligomer with SCN1B or SCN3B; non-covalently linked. Interacts with NEDD4L. Interacts with CALM. Interacts with TMEM233. Interacts with the conotoxin GVIIJ. Interacts with the spider beta/delta-theraphotoxin-Pre1a. Interacts with the conotoxin KIIIA. Interacts with the spider protoxin-II. Post-translationally, may be ubiquitinated by NEDD4L; which would promote its endocytosis. In terms of processing, phosphorylation at Ser-1506 by PKC in a highly conserved cytoplasmic loop slows inactivation of the sodium channel and reduces peak sodium currents. Sumoylated at Lys-38. Sumoylation is induced by hypoxia, increases voltage-gated sodium current and mediates the early response to acute hypoxia in neurons. Sumoylated SCN2A is located at the cell membrane.

The protein resides in the cell membrane. It catalyses the reaction Na(+)(in) = Na(+)(out). Functionally, mediates the voltage-dependent sodium ion permeability of excitable membranes. Assuming opened or closed conformations in response to the voltage difference across the membrane, the protein forms a sodium-selective channel through which Na(+) ions may pass in accordance with their electrochemical gradient. Implicated in the regulation of hippocampal replay occurring within sharp wave ripples (SPW-R) important for memory. The protein is Sodium channel protein type 2 subunit alpha of Homo sapiens (Human).